The chain runs to 201 residues: Recombination protein RecR (201 aa).

Residues 56–71 (CKICFNVSSDEVCQYC) form a C4-type zinc finger. The region spanning 79–174 (SMICVVEESK…TVSRLASGLP (96 aa)) is the Toprim domain.

This sequence belongs to the RecR family.

May play a role in DNA repair. It seems to be involved in an RecBC-independent recombinational process of DNA repair. It may act with RecF and RecO. The sequence is that of Recombination protein RecR from Cutibacterium acnes (strain DSM 16379 / KPA171202) (Propionibacterium acnes).